Consider the following 683-residue polypeptide: Protein kinase C eta type (683 aa).

A C2 domain is found at 1-118 (MSSGTMKFNG…LRTAGTSDTF (118 aa)). A phosphoserine mark is found at serine 28 and serine 32. Phorbol-ester/DAG-type zinc fingers lie at residues 171 to 222 (GHKF…VTAC) and 245 to 295 (PHKF…APNC). Phosphoserine is present on serine 317. The 260-residue stretch at 355–614 (FEFIRVLGKG…EHEILRHPFF (260 aa)) folds into the Protein kinase domain. Residues 361 to 369 (LGKGSFGKV) and lysine 384 each bind ATP. Catalysis depends on aspartate 479, which acts as the Proton acceptor. A Phosphothreonine; by PDPK1 modification is found at threonine 513. An AGC-kinase C-terminal domain is found at 615-683 (KEIDWVQLNH…FSYVSPELQP (69 aa)). Threonine 656 carries the post-translational modification Phosphothreonine. Position 675 is a phosphoserine (serine 675).

The protein belongs to the protein kinase superfamily. AGC Ser/Thr protein kinase family. PKC subfamily. As to quaternary structure, interacts with FYN. Interacts with RALA. Interacts with DGKQ.

The protein localises to the cytoplasm. The enzyme catalyses L-seryl-[protein] + ATP = O-phospho-L-seryl-[protein] + ADP + H(+). It carries out the reaction L-threonyl-[protein] + ATP = O-phospho-L-threonyl-[protein] + ADP + H(+). Its activity is regulated as follows. Novel PKCs (PRKCD, PRKCE, PRKCH and PRKCQ) are calcium-insensitive, but activated by diacylglycerol (DAG) and phosphatidylserine. Three specific sites; Thr-513 (activation loop of the kinase domain), Thr-656 (turn motif) and Ser-675 (hydrophobic region), need to be phosphorylated for its full activation. In terms of biological role, calcium-independent, phospholipid- and diacylglycerol (DAG)-dependent serine/threonine-protein kinase that is involved in the regulation of cell differentiation in keratinocytes and pre-B cell receptor, mediates regulation of epithelial tight junction integrity and foam cell formation, and is required for glioblastoma proliferation and apoptosis prevention in MCF-7 cells. In keratinocytes, binds and activates the tyrosine kinase FYN, which in turn blocks epidermal growth factor receptor (EGFR) signaling and leads to keratinocyte growth arrest and differentiation. Associates with the cyclin CCNE1-CDK2-CDKN1B complex and inhibits CDK2 kinase activity, leading to RB1 dephosphorylation and thereby G1 arrest in keratinocytes. In association with RALA activates actin depolymerization, which is necessary for keratinocyte differentiation. In the pre-B cell receptor signaling, functions downstream of BLNK by up-regulating IRF4, which in turn activates L chain gene rearrangement. Regulates epithelial tight junctions (TJs) by phosphorylating occludin (OCLN) on threonine residues, which is necessary for the assembly and maintenance of TJs. In association with PLD2 and via TLR4 signaling, is involved in lipopolysaccharide (LPS)-induced RGS2 down-regulation and foam cell formation. Upon PMA stimulation, mediates glioblastoma cell proliferation by activating the mTOR pathway, the PI3K/AKT pathway and the ERK1-dependent phosphorylation of ELK1. Involved in the protection of glioblastoma cells from irradiation-induced apoptosis by preventing caspase-9 activation. In camptothecin-treated MCF-7 cells, regulates NF-kappa-B upstream signaling by activating IKBKB, and confers protection against DNA damage-induced apoptosis. Promotes oncogenic functions of ATF2 in the nucleus while blocking its apoptotic function at mitochondria. Phosphorylates ATF2 which promotes its nuclear retention and transcriptional activity and negatively regulates its mitochondrial localization. The protein is Protein kinase C eta type (Prkch) of Rattus norvegicus (Rat).